Reading from the N-terminus, the 1075-residue chain is DNA-directed RNA polymerase subunit beta (1075 aa).

Belongs to the RNA polymerase beta chain family. In terms of assembly, in plastids the minimal PEP RNA polymerase catalytic core is composed of four subunits: alpha, beta, beta', and beta''. When a (nuclear-encoded) sigma factor is associated with the core the holoenzyme is formed, which can initiate transcription.

It localises to the plastid. The protein resides in the chloroplast. The catalysed reaction is RNA(n) + a ribonucleoside 5'-triphosphate = RNA(n+1) + diphosphate. In terms of biological role, DNA-dependent RNA polymerase catalyzes the transcription of DNA into RNA using the four ribonucleoside triphosphates as substrates. This is DNA-directed RNA polymerase subunit beta from Oryza sativa (Rice).